A 459-amino-acid polypeptide reads, in one-letter code: Glutamyl-tRNA(Gln) amidotransferase subunit A, mitochondrial (459 aa).

Catalysis depends on charge relay system residues Lys37 and Ser114. Residue Ser138 is the Acyl-ester intermediate of the active site.

This sequence belongs to the amidase family. GatA subfamily. Subunit of the heterotrimeric GatFAB amidotransferase (AdT) complex, composed of A, B and F subunits.

The protein resides in the mitochondrion. The enzyme catalyses L-glutamyl-tRNA(Gln) + L-glutamine + ATP + H2O = L-glutaminyl-tRNA(Gln) + L-glutamate + ADP + phosphate + H(+). In terms of biological role, allows the formation of correctly charged Gln-tRNA(Gln) through the transamidation of misacylated Glu-tRNA(Gln) in the mitochondria. The reaction takes place in the presence of glutamine and ATP through an activated gamma-phospho-Glu-tRNA(Gln). The sequence is that of Glutamyl-tRNA(Gln) amidotransferase subunit A, mitochondrial from Yarrowia lipolytica (strain CLIB 122 / E 150) (Yeast).